A 726-amino-acid chain; its full sequence is MAAPGARSCNLSGLLPAQTSLEYALLDAVTQEEKDGLVYQYLQKVDGWEQDLLVPEFPEGLEWLNTEEPISVYKDLCGKVVILDFFTYCCINCIHLLPDLHALEHTYSDKDGLLIVGVHSAKFPNEKVLDNIRSAVLRYNITHPVVNDADASLWQELEVSCWPTLIILGPRGNMLFSLIGEGHKEKLFLYTSIALKYYKDRGQIRANKIGIKLYKDSLPPSPLLFPGKITVDHVSNRLVIADTGHHRILVVWKNGQIQYSIGGPNPGRKDGIFSESSFNSPQGVAIMNNIIYVADTENHLIRKIDLEAEMVSTVAGIGIQGTDKEGGAKGDEQPISSPWDVVFGRSGPEVQRDNILWIAMAGTHQIWALLLDCGRLPKKNELKKGTCLRFAGSGNEENRNNAYPHKAGFAQPSGLSLASEGPWSCLFVADSESSTVRTVSLKDGAVKHLVGGERDPMNLFAFGDVDGVGINARLQHPLGVTWDQKRNLLYVADSYNHKIKVVDPKTKNCTTLAGTGNASNMIGSSFTDSTFNEPGGLCIGENGQLLYVADTNNHQIKVLDLETKTVSVFPVFRSENAVVDGPCLAGKPKTLPKLPKSAPGIRLAPVAASPGQTLQFKLRLDLPSGTKLTEGASSCWFLSAEGNEWLLQGQIPSGEIESISNQPTISLQIPGDCLSLEAILSISVFLYYCSSDSSACMMKGILFSQPLQITDTQQDCIPPVELKYIF.

NHL repeat units follow at residues 212 to 254 (KLYK…VWKN), 265 to 307 (NPGR…IDLE), 335 to 369 (ISSPWDVVFGRSGPEVQRDNILWIAMAGTHQIWAL), 409 to 439 (FAQPSGLSLASEGPWSCLFVADSESSTVRTV), 461 to 505 (AFGD…VDPK), and 518 to 562 (ASNM…LDLE).

Monomer.

Its subcellular location is the cytoplasm. The protein localises to the cytosol. Functionally, required for normal embryonic development. The chain is NHL repeat-containing protein 2 (NHLRC2) from Bos taurus (Bovine).